Here is an 812-residue protein sequence, read N- to C-terminus: Mitochondrial intermediate peptidase (812 aa).

The N-terminal 35 residues, 1-35 (MLKLLRPRPWVCNSCLNRVAFPKPYPVGSRSTRWL), are a transit peptide targeting the mitochondrion. The interval 518-544 (STSEGGPAFGSPESAANDGMAASRGAS) is disordered. Position 587 (His-587) interacts with Zn(2+). Glu-588 is an active-site residue. Zn(2+) is bound by residues His-591 and His-594.

Belongs to the peptidase M3 family. Zn(2+) is required as a cofactor.

The protein localises to the mitochondrion matrix. The enzyme catalyses Release of an N-terminal octapeptide as second stage of processing of some proteins imported into the mitochondrion.. Functionally, cleaves proteins, imported into the mitochondrion, to their mature size. While most mitochondrial precursor proteins are processed to the mature form in one step by mitochondrial processing peptidase (MPP), the sequential cleavage by MIP of an octapeptide after initial processing by MPP is a required step for a subgroup of nuclear-encoded precursor proteins destined for the matrix or the inner membrane. In Pyricularia oryzae (strain 70-15 / ATCC MYA-4617 / FGSC 8958) (Rice blast fungus), this protein is Mitochondrial intermediate peptidase (OCT1).